The following is a 418-amino-acid chain: UDP-N-acetylglucosamine 1-carboxyvinyltransferase (418 aa).

Residue Lys22–Asn23 participates in phosphoenolpyruvate binding. Arg92 serves as a coordination point for UDP-N-acetyl-alpha-D-glucosamine. The active-site Proton donor is Cys116. Cys116 bears the 2-(S-cysteinyl)pyruvic acid O-phosphothioketal mark. Residues Arg121–Leu125, Asp305, and Leu327 each bind UDP-N-acetyl-alpha-D-glucosamine.

Belongs to the EPSP synthase family. MurA subfamily.

The protein resides in the cytoplasm. It catalyses the reaction phosphoenolpyruvate + UDP-N-acetyl-alpha-D-glucosamine = UDP-N-acetyl-3-O-(1-carboxyvinyl)-alpha-D-glucosamine + phosphate. The protein operates within cell wall biogenesis; peptidoglycan biosynthesis. Its function is as follows. Cell wall formation. Adds enolpyruvyl to UDP-N-acetylglucosamine. This is UDP-N-acetylglucosamine 1-carboxyvinyltransferase from Campylobacter jejuni subsp. doylei (strain ATCC BAA-1458 / RM4099 / 269.97).